Here is a 420-residue protein sequence, read N- to C-terminus: ATP phosphoribosyltransferase regulatory subunit (420 aa).

Belongs to the class-II aminoacyl-tRNA synthetase family. HisZ subfamily. As to quaternary structure, heteromultimer composed of HisG and HisZ subunits.

It localises to the cytoplasm. It participates in amino-acid biosynthesis; L-histidine biosynthesis; L-histidine from 5-phospho-alpha-D-ribose 1-diphosphate: step 1/9. Its function is as follows. Required for the first step of histidine biosynthesis. May allow the feedback regulation of ATP phosphoribosyltransferase activity by histidine. The chain is ATP phosphoribosyltransferase regulatory subunit from Bacillus thuringiensis subsp. konkukian (strain 97-27).